Here is a 150-residue protein sequence, read N- to C-terminus: D-aminoacyl-tRNA deacylase (150 aa).

Residues 138–139 (GP) carry the Gly-cisPro motif, important for rejection of L-amino acids motif.

The protein belongs to the DTD family. As to quaternary structure, homodimer.

Its subcellular location is the cytoplasm. The enzyme catalyses glycyl-tRNA(Ala) + H2O = tRNA(Ala) + glycine + H(+). It catalyses the reaction a D-aminoacyl-tRNA + H2O = a tRNA + a D-alpha-amino acid + H(+). Functionally, an aminoacyl-tRNA editing enzyme that deacylates mischarged D-aminoacyl-tRNAs. Also deacylates mischarged glycyl-tRNA(Ala), protecting cells against glycine mischarging by AlaRS. Acts via tRNA-based rather than protein-based catalysis; rejects L-amino acids rather than detecting D-amino acids in the active site. By recycling D-aminoacyl-tRNA to D-amino acids and free tRNA molecules, this enzyme counteracts the toxicity associated with the formation of D-aminoacyl-tRNA entities in vivo and helps enforce protein L-homochirality. This Christiangramia forsetii (strain DSM 17595 / CGMCC 1.15422 / KT0803) (Gramella forsetii) protein is D-aminoacyl-tRNA deacylase.